We begin with the raw amino-acid sequence, 77 residues long: NADH-ubiquinone oxidoreductase chain 4L (77 aa).

2 helical membrane passes run 15–37 (WQRLIFILISLEFMMLSLFLKFS) and 44–64 (MFFYFMCFSVISSILGMVVMV).

The protein belongs to the complex I subunit 4L family.

It is found in the mitochondrion membrane. The catalysed reaction is a ubiquinone + NADH + 5 H(+)(in) = a ubiquinol + NAD(+) + 4 H(+)(out). Its function is as follows. Core subunit of the mitochondrial membrane respiratory chain NADH dehydrogenase (Complex I) that is believed to belong to the minimal assembly required for catalysis. Complex I functions in the transfer of electrons from NADH to the respiratory chain. The immediate electron acceptor for the enzyme is believed to be ubiquinone. In Caenorhabditis elegans, this protein is NADH-ubiquinone oxidoreductase chain 4L.